We begin with the raw amino-acid sequence, 276 residues long: Elongation factor Ts (276 aa).

The interval T76–V79 is involved in Mg(2+) ion dislocation from EF-Tu.

Belongs to the EF-Ts family.

Its subcellular location is the cytoplasm. In terms of biological role, associates with the EF-Tu.GDP complex and induces the exchange of GDP to GTP. It remains bound to the aminoacyl-tRNA.EF-Tu.GTP complex up to the GTP hydrolysis stage on the ribosome. In Mycobacterium leprae (strain Br4923), this protein is Elongation factor Ts.